Consider the following 131-residue polypeptide: Small ribosomal subunit protein uS8 (131 aa).

It belongs to the universal ribosomal protein uS8 family. In terms of assembly, part of the 30S ribosomal subunit. Contacts proteins S5 and S12.

Functionally, one of the primary rRNA binding proteins, it binds directly to 16S rRNA central domain where it helps coordinate assembly of the platform of the 30S subunit. This Dehalococcoides mccartyi (strain CBDB1) protein is Small ribosomal subunit protein uS8.